Reading from the N-terminus, the 157-residue chain is Protein-export protein SecB (157 aa).

It belongs to the SecB family. Homotetramer, a dimer of dimers. One homotetramer interacts with 1 SecA dimer.

The protein localises to the cytoplasm. In terms of biological role, one of the proteins required for the normal export of preproteins out of the cell cytoplasm. It is a molecular chaperone that binds to a subset of precursor proteins, maintaining them in a translocation-competent state. It also specifically binds to its receptor SecA. This is Protein-export protein SecB from Magnetococcus marinus (strain ATCC BAA-1437 / JCM 17883 / MC-1).